A 464-amino-acid chain; its full sequence is Glutamate--tRNA ligase 1 (464 aa).

The 'HIGH' region motif lies at 8-18 (PSPTGHLHVGG). Positions 231–235 (PLSKR) match the 'KMSKS' region motif. Lysine 234 provides a ligand contact to ATP.

This sequence belongs to the class-I aminoacyl-tRNA synthetase family. Glutamate--tRNA ligase type 1 subfamily. In terms of assembly, monomer.

Its subcellular location is the cytoplasm. The enzyme catalyses tRNA(Glu) + L-glutamate + ATP = L-glutamyl-tRNA(Glu) + AMP + diphosphate. Catalyzes the attachment of glutamate to tRNA(Glu) in a two-step reaction: glutamate is first activated by ATP to form Glu-AMP and then transferred to the acceptor end of tRNA(Glu). This chain is Glutamate--tRNA ligase 1, found in Thermotoga sp. (strain RQ2).